Here is a 192-residue protein sequence, read N- to C-terminus: MVSKPRTEWSTVLSHLVLAGVSLHAAVSSVQSSRGAAAGFLLQTFAAIIMLAPGPSTHEDCLAGAWVATVIGLPLLAFDFHWVNGDRSSANLLLGGGMVLAVAGDHLGPEGCSVAGQAVLLVVAVTILIVAVFTANTYGMWGGTLLGVAGLLSRLEEDRLLLLPKEDVCRWALAAGSWAYCRALHTQRLQWE.

The first 32 residues, 1–32 (MVSKPRTEWSTVLSHLVLAGVSLHAAVSSVQS), serve as a signal peptide directing secretion. 4 helical membrane passes run 35–55 (GAAAGFLLQTFAAIIMLAPGP), 63–83 (AGAWVATVIGLPLLAFDFHWV), 92–112 (LLLGGGMVLAVAGDHLGPEGC), and 114–134 (VAGQAVLLVVAVTILIVAVFT).

It is found in the membrane. The sequence is that of Transmembrane protein 276 from Mus musculus (Mouse).